The following is a 149-amino-acid chain: Nucleoside diphosphate kinase (149 aa).

Positions 9, 57, 85, 91, 102, and 112 each coordinate ATP. His-115 acts as the Pros-phosphohistidine intermediate in catalysis.

It belongs to the NDK family. Homotetramer. Requires Mg(2+) as cofactor.

It is found in the cytoplasm. The catalysed reaction is dZDP + ATP = dZTP + ADP. The enzyme catalyses a 2'-deoxyribonucleoside 5'-diphosphate + ATP = a 2'-deoxyribonucleoside 5'-triphosphate + ADP. It catalyses the reaction a ribonucleoside 5'-diphosphate + ATP = a ribonucleoside 5'-triphosphate + ADP. It participates in purine metabolism. Major role in the synthesis of nucleoside triphosphates other than ATP. The ATP gamma phosphate is transferred to the NDP beta phosphate via a ping-pong mechanism, using a phosphorylated active-site intermediate. Its function is as follows. (Microbial infection) Catalyzes the phosphorylation of dZDP to dZTP, when the bacterium is infected by a phage that produces the substrate for the synthesis of dZTP (2- amino-2'-deoxyadenosine 5'-triphosphate), which is then used by the phage as a DNA polymerase substrate. This Synechococcus elongatus (strain ATCC 33912 / PCC 7942 / FACHB-805) (Anacystis nidulans R2) protein is Nucleoside diphosphate kinase.